Reading from the N-terminus, the 515-residue chain is Cytosolic Fe-S cluster assembly factor NAR1 homolog (515 aa).

8 residues coordinate [4Fe-4S] cluster: Cys-19, Cys-65, Cys-68, Cys-71, Cys-192, Cys-247, Cys-428, and Cys-432.

Belongs to the NARF family.

Its function is as follows. Component of the cytosolic Fe/S protein assembly machinery. Required for maturation of extramitochondrial Fe/S proteins. May play a role in the transfer of pre-assembled Fe/S clusters to target apoproteins. This Schizosaccharomyces japonicus (strain yFS275 / FY16936) (Fission yeast) protein is Cytosolic Fe-S cluster assembly factor NAR1 homolog.